A 352-amino-acid chain; its full sequence is RNA-binding protein lark (352 aa).

2 RRM domains span residues 7–77 (FKLF…AAKS) and 86–156 (TKIF…VSTS). Residues 168 to 185 (EQCYRCGRSGHWSKECPR) form a CCHC-type zinc finger. 2 disordered regions span residues 187 to 228 (YGSA…LRDR) and 254 to 352 (YQTS…YAPY). Residues Ser-198 and Ser-201 each carry the phosphoserine modification. Composition is skewed to pro residues over residues 214–224 (PYPPPPPPPPF) and 262–277 (FPPP…PLPP). Polar residues predominate over residues 279–288 (LSGSLRSCSV). Ser-315 and Ser-325 each carry phosphoserine. The segment covering 320–334 (GYEDFSRDAFDERMI) has biased composition (basic and acidic residues).

In terms of tissue distribution, expressed in the CNS and in CCAP neurons of the ventral nervous system (VNS), which control insect ecdysis.

The protein resides in the cytoplasm. The protein localises to the nucleus. Essential RNA-binding protein. May be required for circadian repression of eclosion. Also essential for nurse cell dumping during oogenesis, the process whereby the cytoplasmic contents of nurse cells are transferred to the oocyte late in it's development. The polypeptide is RNA-binding protein lark (lark) (Drosophila melanogaster (Fruit fly)).